Here is a 297-residue protein sequence, read N- to C-terminus: Phosphoribosylaminoimidazole-succinocarboxamide synthase (297 aa).

It belongs to the SAICAR synthetase family.

The catalysed reaction is 5-amino-1-(5-phospho-D-ribosyl)imidazole-4-carboxylate + L-aspartate + ATP = (2S)-2-[5-amino-1-(5-phospho-beta-D-ribosyl)imidazole-4-carboxamido]succinate + ADP + phosphate + 2 H(+). The protein operates within purine metabolism; IMP biosynthesis via de novo pathway; 5-amino-1-(5-phospho-D-ribosyl)imidazole-4-carboxamide from 5-amino-1-(5-phospho-D-ribosyl)imidazole-4-carboxylate: step 1/2. The polypeptide is Phosphoribosylaminoimidazole-succinocarboxamide synthase (Methylococcus capsulatus (strain ATCC 33009 / NCIMB 11132 / Bath)).